A 327-amino-acid chain; its full sequence is Metapyrocatechase (327 aa).

2 consecutive VOC domains span residues 14 to 126 (QLAH…IFFE) and 156 to 276 (RLDH…LFGD). 3 residues coordinate Fe cation: H159, H221, and E272.

The protein belongs to the extradiol ring-cleavage dioxygenase family. Fe(2+) is required as a cofactor.

The enzyme catalyses catechol + O2 = (2Z,4E)-2-hydroxy-6-oxohexa-2,4-dienoate + H(+). This is Metapyrocatechase (pheB) from Geobacillus stearothermophilus (Bacillus stearothermophilus).